Reading from the N-terminus, the 465-residue chain is Ubiquitin carboxyl-terminal hydrolase UCH54 (465 aa).

The region spanning 11 to 333 (EWCLIESNPC…VRFNIIAVMK (323 aa)) is the UCH catalytic domain. C145 serves as the catalytic Nucleophile. The active-site Proton donor is the H220. The interval 244–293 (INADEQNKPNPNNNNNNKDNDNDNNNNNNNNNNNNNNNNNNNNNNNNNNI) is disordered. Residues 251–292 (KPNPNNNNNNKDNDNDNNNNNNNNNNNNNNNNNNNNNNNNNN) show a composition bias toward low complexity. Residues 432–460 (NFYPFIMSSLNLMAKHKLLKDAYQKEKLK) form the ULD domain.

The protein belongs to the peptidase C12 family.

It carries out the reaction Thiol-dependent hydrolysis of ester, thioester, amide, peptide and isopeptide bonds formed by the C-terminal Gly of ubiquitin (a 76-residue protein attached to proteins as an intracellular targeting signal).. Thiol protease that recognizes and hydrolyzes a peptide bond at the C-terminal glycine of either ubiquitin or NEDD8. In Plasmodium falciparum (isolate 3D7), this protein is Ubiquitin carboxyl-terminal hydrolase UCH54.